A 448-amino-acid polypeptide reads, in one-letter code: Alpha-2B adrenergic receptor (448 aa).

Over 1–12 the chain is Extracellular; it reads MDHQEPYSVQAT. The helical transmembrane segment at 13–38 threads the bilayer; it reads AAIAAVITFLILFTIFGNALVILAVL. Over 39–49 the chain is Cytoplasmic; it reads TSRSLPAPQNL. A helical transmembrane segment spans residues 50–75; the sequence is FLVSLAAADILVATLIIPFSLANELL. Topologically, residues 76–85 are extracellular; sequence GYWYFWRTWC. A disulfide bridge connects residues C85 and C163. Residues 86–108 traverse the membrane as a helical segment; it reads EVYLALDVLFCTSSIVHLCAISL. Residues 109-130 lie on the Cytoplasmic side of the membrane; the sequence is DRYWAVSRALEYNSKRTPRRIK. A helical membrane pass occupies residues 131-153; it reads CIILTVWLIAAVISLPPLIYKGD. Residues 154-168 are Extracellular-facing; sequence QGPSPRGPQCKINQE. A helical membrane pass occupies residues 169–192; that stretch reads AWYILASSIGSFFAPCLIMILVYL. Residues 193-370 are Cytoplasmic-facing; that stretch reads RIYLIAKRSH…MTREKRFTFV (178 aa). Positions 203 to 326 are disordered; sequence RRGPRAKGGP…PASMCSPSLQ (124 aa). Acidic residues predominate over residues 293-309; that stretch reads AEEEAEEEEEEEGDECE. Residues 371 to 394 form a helical membrane-spanning segment; that stretch reads LAVVIGVFVLCWFPFFFTYSLGAI. At 395 to 403 the chain is on the extracellular side; the sequence is CPQHCKVPH. Residues 404–427 traverse the membrane as a helical segment; sequence GLFQFFFWIGYCNSSLNPVIYTIF. At 428–448 the chain is on the cytoplasmic side; it reads NQDFRRAFRRILCRQWTQTAW. The S-palmitoyl cysteine moiety is linked to residue C440.

This sequence belongs to the G-protein coupled receptor 1 family. Adrenergic receptor subfamily. ADRA2B sub-subfamily. Interacts with RAB26. Interacts with PPP1R9B.

The protein resides in the cell membrane. Alpha-2 adrenergic receptors mediate the catecholamine-induced inhibition of adenylate cyclase through the action of G proteins. The chain is Alpha-2B adrenergic receptor (ADRA2B) from Cavia porcellus (Guinea pig).